The primary structure comprises 224 residues: Putative N-acetylmannosamine-6-phosphate 2-epimerase (224 aa).

Belongs to the NanE family.

The enzyme catalyses an N-acyl-D-glucosamine 6-phosphate = an N-acyl-D-mannosamine 6-phosphate. Its pathway is amino-sugar metabolism; N-acetylneuraminate degradation; D-fructose 6-phosphate from N-acetylneuraminate: step 3/5. Functionally, converts N-acetylmannosamine-6-phosphate (ManNAc-6-P) to N-acetylglucosamine-6-phosphate (GlcNAc-6-P). This chain is Putative N-acetylmannosamine-6-phosphate 2-epimerase, found in Staphylococcus carnosus (strain TM300).